The sequence spans 308 residues: Cytochrome c biogenesis protein CcsA (308 aa).

Helical transmembrane passes span 17–37 (IISI…VGLC), 43–63 (GMIT…IYSG), 70–90 (LYES…VPYF), 142–162 (MLLS…LLVI), 213–233 (VIGL…VWAN), 246–260 (ETWA…AIYL), and 274–294 (AIVA…VNLL).

The protein belongs to the CcmF/CycK/Ccl1/NrfE/CcsA family. As to quaternary structure, may interact with Ccs1.

The protein resides in the plastid. The protein localises to the chloroplast thylakoid membrane. Functionally, required during biogenesis of c-type cytochromes (cytochrome c6 and cytochrome f) at the step of heme attachment. This Nymphaea alba (White water-lily) protein is Cytochrome c biogenesis protein CcsA.